Reading from the N-terminus, the 168-residue chain is Crossover junction endodeoxyribonuclease RuvC (168 aa).

Residues Asp-8, Glu-68, and Asp-140 contribute to the active site. Asp-8, Glu-68, and Asp-140 together coordinate Mg(2+).

This sequence belongs to the RuvC family. As to quaternary structure, homodimer which binds Holliday junction (HJ) DNA. The HJ becomes 2-fold symmetrical on binding to RuvC with unstacked arms; it has a different conformation from HJ DNA in complex with RuvA. In the full resolvosome a probable DNA-RuvA(4)-RuvB(12)-RuvC(2) complex forms which resolves the HJ. The cofactor is Mg(2+).

The protein resides in the cytoplasm. The catalysed reaction is Endonucleolytic cleavage at a junction such as a reciprocal single-stranded crossover between two homologous DNA duplexes (Holliday junction).. The RuvA-RuvB-RuvC complex processes Holliday junction (HJ) DNA during genetic recombination and DNA repair. Endonuclease that resolves HJ intermediates. Cleaves cruciform DNA by making single-stranded nicks across the HJ at symmetrical positions within the homologous arms, yielding a 5'-phosphate and a 3'-hydroxyl group; requires a central core of homology in the junction. The consensus cleavage sequence is 5'-(A/T)TT(C/G)-3'. Cleavage occurs on the 3'-side of the TT dinucleotide at the point of strand exchange. HJ branch migration catalyzed by RuvA-RuvB allows RuvC to scan DNA until it finds its consensus sequence, where it cleaves and resolves the cruciform DNA. This chain is Crossover junction endodeoxyribonuclease RuvC, found in Lawsonia intracellularis (strain PHE/MN1-00).